Here is a 323-residue protein sequence, read N- to C-terminus: Viral cathepsin (323 aa).

The signal sequence occupies residues 1–16 (MNKILFYLFVYAVVKS). A propeptide spans 17–112 (AAYDPLKAPN…ILLDQPPGKG (96 aa)) (activation peptide). 3 disulfide bridges follow: Cys133/Cys174, Cys167/Cys207, and Cys262/Cys310. Residue Cys136 is part of the active site. N-linked (GlcNAc...) asparagine; by host glycosylation occurs at Asn158. Active-site residues include His269 and Asn289.

Belongs to the peptidase C1 family. Post-translationally, synthesized as an inactive proenzyme and activated by proteolytic removal of the inhibitory propeptide.

It carries out the reaction Endopeptidase of broad specificity, hydrolyzing substrates of both cathepsin L and cathepsin B.. Its function is as follows. Cysteine protease that plays an essential role in host liquefaction to facilitate horizontal transmission of the virus. May participate in the degradation of foreign protein expressed by the baculovirus system. This Bombyx mori (Silk moth) protein is Viral cathepsin (VCATH).